A 77-amino-acid polypeptide reads, in one-letter code: U8-lycotoxin-Ls1g (77 aa).

The first 20 residues, 1-20 (MKLIIFTGLVLFAIVSLIEV), serve as a signal peptide directing secretion. Residues 21-26 (QADNER) constitute a propeptide that is removed on maturation.

Belongs to the neurotoxin 19 (CSTX) family. 08 (U8-Lctx) subfamily. Contains 4 disulfide bonds. In terms of tissue distribution, expressed by the venom gland.

The protein localises to the secreted. The protein is U8-lycotoxin-Ls1g of Lycosa singoriensis (Wolf spider).